A 409-amino-acid chain; its full sequence is Torsin-4A (409 aa).

The segment covering 1–16 (MGEQDPSDRLRGDQLK) has biased composition (basic and acidic residues). 2 disordered regions span residues 1–28 (MGEQDPSDRLRGDQLKEPNQNGKGSFSQ) and 75–99 (DNLHEPVNSNPASPRKRKKKRKGRV). The segment covering 17 to 28 (EPNQNGKGSFSQ) has biased composition (polar residues). The segment covering 88-98 (PRKRKKKRKGR) has biased composition (basic residues). A helical membrane pass occupies residues 120-136 (CLYLLCIIVFLQVYNAI). Position 192-199 (192-199 (GPTGVGKS)) interacts with ATP.

This sequence belongs to the ClpA/ClpB family. Torsin subfamily.

The protein resides in the membrane. This Danio rerio (Zebrafish) protein is Torsin-4A (tor4a).